The chain runs to 266 residues: Putative carbamate hydrolase RutD (266 aa).

It belongs to the AB hydrolase superfamily. Hydrolase RutD family.

The enzyme catalyses carbamate + 2 H(+) = NH4(+) + CO2. Involved in pyrimidine catabolism. May facilitate the hydrolysis of carbamate, a reaction that can also occur spontaneously. In Escherichia coli O150:H5 (strain SE15), this protein is Putative carbamate hydrolase RutD.